The chain runs to 764 residues: Sesterfisherol synthase (764 aa).

Residues 2–331 (EVWEHSRPIA…SPRHHAWRNN (330 aa)) are terpene cyclase. Residue D95 coordinates Mg(2+). Substrate is bound by residues D95, 187–190 (RRDD), N231, 235–239 (SFDRE), and 324–325 (RH). A DDXXD 1 motif is present at residues 95–99 (DDGYE). The NSE/DTE signature appears at 231 to 239 (NDYWSFDRE). Residues 332–759 (SRNGLKPANH…PMLRLLLEKL (428 aa)) are prenyltransferase. The tract at residues 347–372 (LITPSNNLNSSKGSEEQMQDSDNGTR) is disordered. The segment covering 348–358 (ITPSNNLNSSK) has biased composition (polar residues). Positions 476, 479, and 508 each coordinate isopentenyl diphosphate. The Mg(2+) site is built by D515 and D519. A DDXXD 2 motif is present at residues 515 to 519 (DDIED). R524 is a binding site for dimethylallyl diphosphate. R525 serves as a coordination point for isopentenyl diphosphate. The dimethylallyl diphosphate site is built by K602, T603, Q638, N645, K655, and K665.

In the N-terminal section; belongs to the terpene synthase family. This sequence in the C-terminal section; belongs to the FPP/GGPP synthase family. As to quaternary structure, hexamer. Mg(2+) is required as a cofactor.

It catalyses the reaction isopentenyl diphosphate + (2E,6E)-farnesyl diphosphate = (2E,6E,10E)-geranylgeranyl diphosphate + diphosphate. The catalysed reaction is isopentenyl diphosphate + (2E,6E,10E)-geranylgeranyl diphosphate = (2E,6E,10E,14E)-geranylfarnesyl diphosphate + diphosphate. It carries out the reaction (2E,6E,10E,14E)-geranylfarnesyl diphosphate + H2O = sesterfisherol + diphosphate. It participates in secondary metabolite biosynthesis; terpenoid biosynthesis. Its function is as follows. Bifunctional terpene synthase; part of the gene cluster that mediates the biosynthesis of sesterfisheric acid. The bifunctional terpene synthase NfSS converts dimethylallyl diphosphate (DMAPP) and isopentenyl diphosphate (IPP) into sesterfisherol. The C-terminal prenyltransferase (PT) domain of NfSS catalyzes formation of geranylfarnesyl pyrophosphate (GFPP), whereas the N-terminal terpene cyclase (TC) domain catalyzes the cyclization of GFPP to sesterfisherol. The cytochrome P450 monooxygenase NfP450 then catalyzes oxidative modifications of sesterfisherol into sesterfisheric acid. The sequence is that of Sesterfisherol synthase from Neosartorya fischeri (strain ATCC 1020 / DSM 3700 / CBS 544.65 / FGSC A1164 / JCM 1740 / NRRL 181 / WB 181) (Aspergillus fischerianus).